We begin with the raw amino-acid sequence, 83 residues long: Sec-independent protein translocase protein TatA (83 aa).

A helical transmembrane segment spans residues 1 to 21; the sequence is MGNMGIWQLLIIAVIVILLFG. Basic and acidic residues-rich tracts occupy residues 47–57 and 71–83; these read EEKKALEETAS and AEKK…KEQV. Residues 47-83 are disordered; the sequence is EEKKALEETASEKATPSVEKTAPNAEKKTETKDKEQV.

Belongs to the TatA/E family. As to quaternary structure, the Tat system comprises two distinct complexes: a TatABC complex, containing multiple copies of TatA, TatB and TatC subunits, and a separate TatA complex, containing only TatA subunits. Substrates initially bind to the TatABC complex, which probably triggers association of the separate TatA complex to form the active translocon.

The protein resides in the cell inner membrane. In terms of biological role, part of the twin-arginine translocation (Tat) system that transports large folded proteins containing a characteristic twin-arginine motif in their signal peptide across membranes. TatA could form the protein-conducting channel of the Tat system. This chain is Sec-independent protein translocase protein TatA, found in Shewanella woodyi (strain ATCC 51908 / MS32).